A 724-amino-acid polypeptide reads, in one-letter code: 1,4-alpha-glucan branching enzyme GlgB 1 (724 aa).

The active-site Nucleophile is the D403. Catalysis depends on E456, which acts as the Proton donor.

It belongs to the glycosyl hydrolase 13 family. GlgB subfamily. In terms of assembly, monomer.

It carries out the reaction Transfers a segment of a (1-&gt;4)-alpha-D-glucan chain to a primary hydroxy group in a similar glucan chain.. It functions in the pathway glycan biosynthesis; glycogen biosynthesis. Its function is as follows. Catalyzes the formation of the alpha-1,6-glucosidic linkages in glycogen by scission of a 1,4-alpha-linked oligosaccharide from growing alpha-1,4-glucan chains and the subsequent attachment of the oligosaccharide to the alpha-1,6 position. This is 1,4-alpha-glucan branching enzyme GlgB 1 (glgB1) from Xanthomonas axonopodis pv. citri (strain 306).